Here is a 520-residue protein sequence, read N- to C-terminus: Cholesterol side-chain cleavage enzyme, mitochondrial (520 aa).

A mitochondrion-targeting transit peptide spans 1-39 (MLARGLALRSVLVKGCQPFLSAPRECPGHPRVGTGEGAC). Cys-461 serves as a coordination point for heme.

The protein belongs to the cytochrome P450 family. In terms of assembly, interacts with FDX1/adrenodoxin. Heme serves as cofactor.

It localises to the mitochondrion inner membrane. It carries out the reaction 6 reduced [adrenodoxin] + cholesterol + 3 O2 + 6 H(+) = 4-methylpentanal + pregnenolone + 6 oxidized [adrenodoxin] + 4 H2O. The enzyme catalyses 2 reduced [adrenodoxin] + cholesterol + O2 + 2 H(+) = (22R)-hydroxycholesterol + 2 oxidized [adrenodoxin] + H2O. It catalyses the reaction (22R)-hydroxycholesterol + 2 reduced [adrenodoxin] + O2 + 2 H(+) = (20R,22R)-20,22-dihydroxycholesterol + 2 oxidized [adrenodoxin] + H2O. The catalysed reaction is (20R,22R)-20,22-dihydroxycholesterol + 2 reduced [adrenodoxin] + O2 + 2 H(+) = 4-methylpentanal + pregnenolone + 2 oxidized [adrenodoxin] + 2 H2O. The protein operates within lipid metabolism; C21-steroid hormone metabolism. Its pathway is steroid metabolism; cholesterol metabolism. In terms of biological role, a cytochrome P450 monooxygenase that catalyzes the side-chain hydroxylation and cleavage of cholesterol to pregnenolone, the precursor of most steroid hormones. Catalyzes three sequential oxidation reactions of cholesterol, namely the hydroxylation at C22 followed with the hydroxylation at C20 to yield 20R,22R-hydroxycholesterol that is further cleaved between C20 and C22 to yield the C21-steroid pregnenolone and 4-methylpentanal. Mechanistically, uses molecular oxygen inserting one oxygen atom into a substrate and reducing the second into a water molecule. Two electrons are provided by NADPH via a two-protein mitochondrial transfer system comprising flavoprotein FDXR (adrenodoxin/ferredoxin reductase) and nonheme iron-sulfur protein FDX1 or FDX2 (adrenodoxin/ferredoxin). This chain is Cholesterol side-chain cleavage enzyme, mitochondrial (CYP11A1), found in Sus scrofa (Pig).